The sequence spans 76 residues: Large ribosomal subunit protein bL31 (76 aa).

Cysteine 16, cysteine 18, cysteine 37, and cysteine 40 together coordinate Zn(2+).

It belongs to the bacterial ribosomal protein bL31 family. Type A subfamily. In terms of assembly, part of the 50S ribosomal subunit. It depends on Zn(2+) as a cofactor.

Its function is as follows. Binds the 23S rRNA. The sequence is that of Large ribosomal subunit protein bL31 from Maridesulfovibrio salexigens (strain ATCC 14822 / DSM 2638 / NCIMB 8403 / VKM B-1763) (Desulfovibrio salexigens).